A 398-amino-acid chain; its full sequence is Phosphoglycerate kinase (398 aa).

Residues 23–25 (DLN), Arg38, 61–64 (HFGR), Arg119, and Arg152 contribute to the substrate site. Residues Lys202, Glu324, and 354–357 (GGDT) contribute to the ATP site.

This sequence belongs to the phosphoglycerate kinase family. In terms of assembly, monomer.

It is found in the cytoplasm. It catalyses the reaction (2R)-3-phosphoglycerate + ATP = (2R)-3-phospho-glyceroyl phosphate + ADP. It functions in the pathway carbohydrate degradation; glycolysis; pyruvate from D-glyceraldehyde 3-phosphate: step 2/5. The protein is Phosphoglycerate kinase of Rhodopseudomonas palustris (strain ATCC BAA-98 / CGA009).